The primary structure comprises 426 residues: Serine--tRNA ligase (426 aa).

Residue 233–235 (TAE) coordinates L-serine. 264-266 (RSE) is an ATP binding site. Glutamate 287 provides a ligand contact to L-serine. ATP is bound at residue 351-354 (EISS). Serine 387 is an L-serine binding site.

Belongs to the class-II aminoacyl-tRNA synthetase family. Type-1 seryl-tRNA synthetase subfamily. Homodimer. The tRNA molecule binds across the dimer.

Its subcellular location is the cytoplasm. The enzyme catalyses tRNA(Ser) + L-serine + ATP = L-seryl-tRNA(Ser) + AMP + diphosphate + H(+). It carries out the reaction tRNA(Sec) + L-serine + ATP = L-seryl-tRNA(Sec) + AMP + diphosphate + H(+). Its pathway is aminoacyl-tRNA biosynthesis; selenocysteinyl-tRNA(Sec) biosynthesis; L-seryl-tRNA(Sec) from L-serine and tRNA(Sec): step 1/1. In terms of biological role, catalyzes the attachment of serine to tRNA(Ser). Is also able to aminoacylate tRNA(Sec) with serine, to form the misacylated tRNA L-seryl-tRNA(Sec), which will be further converted into selenocysteinyl-tRNA(Sec). This Clostridium botulinum (strain Hall / ATCC 3502 / NCTC 13319 / Type A) protein is Serine--tRNA ligase.